A 216-amino-acid chain; its full sequence is Protein-L-isoaspartate O-methyltransferase (216 aa).

Ser-61 is a catalytic residue.

It belongs to the methyltransferase superfamily. L-isoaspartyl/D-aspartyl protein methyltransferase family.

The protein localises to the cytoplasm. It catalyses the reaction [protein]-L-isoaspartate + S-adenosyl-L-methionine = [protein]-L-isoaspartate alpha-methyl ester + S-adenosyl-L-homocysteine. Catalyzes the methyl esterification of L-isoaspartyl residues in peptides and proteins that result from spontaneous decomposition of normal L-aspartyl and L-asparaginyl residues. It plays a role in the repair and/or degradation of damaged proteins. The polypeptide is Protein-L-isoaspartate O-methyltransferase (Geobacter metallireducens (strain ATCC 53774 / DSM 7210 / GS-15)).